The chain runs to 507 residues: Blue light receptor lreB (507 aa).

One can recognise a PAS domain in the interval 170 to 234; that stretch reads RVLNEMKDML…EEMNECITTT (65 aa). The GATA-type zinc finger occupies 463–488; that stretch reads CTDCGTSDSPEWRKGPEGPKTLCNAC.

Functionally, probable transcription factor involved in light regulation. Plays crucial roles in fungal growth and asexual development. Involved in conidiophore formation, sclerotium production, and conidial stress tolerance. Positively regulates the fungal pathogenicity towards maize and aflatoxin B1 production. The polypeptide is Blue light receptor lreB (Aspergillus flavus).